Here is a 265-residue protein sequence, read N- to C-terminus: Beta-lactamase OXA-48 (265 aa).

An N-terminal signal peptide occupies residues 1–22; the sequence is MRVLALSAVFLVASIIGMPAVA. Residue S70 is the Acyl-ester intermediate of the active site. 4 residues coordinate a beta-lactam: S70, K73, S118, and R250. K73 is subject to N6-carboxylysine.

The protein belongs to the class-D beta-lactamase family. In terms of assembly, monomer. Dimer. In terms of processing, carboxylated on the epsilon-amino group of a lysine, with the resulting carbamate functional group serving as a general base. Probably N-carboxylated at Lys-73 at neutral pH in vivo and undergoes complete N-decarboxylation, at pH 4.1, in vitro.

It carries out the reaction a beta-lactam + H2O = a substituted beta-amino acid. Its activity is regulated as follows. Inhibited by avibactam, related diazabicyclooctane (DBO) derivatives and by bicyclic boronic acids, via a covalent binding to Ser-70. Inhibited by chloride, bromide and iodide ions. Not inhibited by the beta-lactamase-blocking agents, clavulanic acid or tazobactam. Functionally, class D beta-lactamase which confers resistance to the beta-lactam antibiotics, including amoxicillin, and moderate resistance to cephalosporins and carbapenems such as cephalothin and imipenem; in the DH10B strain of E.coli. Acts via hydrolysis of the beta-lactam ring. Has oxacillin-, cephalothin- and imipenem-hydrolyzing activities. The protein is Beta-lactamase OXA-48 of Klebsiella pneumoniae.